The following is a 121-amino-acid chain: MTQSTEDTLLRLAGVIDSRKGGDPEQSYVSRLFHKGDDAVLKKIGEEATEVVLAAKDVRQGGAPSALVGEVADLWFHCLVMLSHFDLSPADVIAELERREGLSGIEEKALRKRREREANGG.

The protein belongs to the PRA-PH family.

It is found in the cytoplasm. It carries out the reaction 1-(5-phospho-beta-D-ribosyl)-ATP + H2O = 1-(5-phospho-beta-D-ribosyl)-5'-AMP + diphosphate + H(+). It functions in the pathway amino-acid biosynthesis; L-histidine biosynthesis; L-histidine from 5-phospho-alpha-D-ribose 1-diphosphate: step 2/9. The polypeptide is Phosphoribosyl-ATP pyrophosphatase (Burkholderia multivorans (strain ATCC 17616 / 249)).